We begin with the raw amino-acid sequence, 601 residues long: RNA-binding protein MEX3B (601 aa).

Disordered regions lie at residues 1-39 (MPSSLFADLERNGSGGGGGGGGGGGGGGSGGGETLDDQR) and 90-109 (GRQGGSGRDGDRRGFSISPT). The residue at position 4 (serine 4) is a Phosphoserine. Residues 13–33 (GSGGGGGGGGGGGGGGSGGGE) are compositionally biased toward gly residues. 2 KH domains span residues 98 to 159 (DGDR…RREI) and 192 to 253 (QTTI…REEI). Disordered stretches follow at residues 284 to 332 (LHHG…TDSY) and 344 to 448 (TSRL…GGAS). Phosphoserine is present on serine 320. 2 stretches are compositionally biased toward low complexity: residues 320–331 (SSSSLGSASTDS) and 362–371 (NGNNNNNGNG). A compositionally biased stretch (pro residues) spans 395–404 (DPAPAPPPGT). Positions 420-442 (AAPVSSSCSSSASSSASSSSVVF) are enriched in low complexity. Residue serine 494 is modified to Phosphoserine. The segment at 514–546 (LPGLPSSDTSGSSSSSSSSSSSSSSSSGLRRKG) is disordered. Residues 519-540 (SSDTSGSSSSSSSSSSSSSSSS) show a composition bias toward low complexity. The RING-type zinc finger occupies 550–590 (CSVCFESEVIAALVPCGHNLFCMECANRICEKSEPECPVCH).

Phosphorylation at Ser-494 creates a docking site for 14-3-3, which stabilizes the protein and modulates its ability to bind RNA.

The protein resides in the cytoplasm. The protein localises to the nucleus. It is found in the P-body. Its subcellular location is the cytoplasmic granule. Functionally, RNA-binding protein. May be involved in post-transcriptional regulatory mechanisms. This chain is RNA-binding protein MEX3B (Mex3b), found in Mus musculus (Mouse).